The following is a 289-amino-acid chain: Zinc finger matrin-type protein 3 (289 aa).

Residues 1 to 59 form a disordered region; sequence MILLQHAGLPPPKRPSSSPPMSVAARSTGALQLPPQKPFGQEASLPLAGEEEPPKGGEQ. Pro residues predominate over residues 9-18; sequence LPPPKRPSSS. 2 Matrin-type zinc fingers span residues 70–100 and 147–177; these read LYCK…KLRN and DYCK…RLRL. A compositionally biased stretch (polar residues) spans 180–191; it reads AQSNSFSDSSEV. Residues 180 to 200 form a disordered region; that stretch reads AQSNSFSDSSEVGQRRTRKEG. The segment at 246–276 adopts a Matrin-type 3 zinc-finger fold; that stretch reads FYCSMCNVGAGEEVEFRQHLESKQHKSKVSE.

In terms of assembly, interacts with dsRNA.

It is found in the nucleus. Its subcellular location is the nucleolus. Acts as a bona fide target gene of p53/TP53. May play a role in the TP53-dependent growth regulatory pathway. May contribute to TP53-mediated apoptosis by regulation of TP53 expression and translocation to the nucleus and nucleolus. This chain is Zinc finger matrin-type protein 3, found in Bos taurus (Bovine).